The primary structure comprises 344 residues: Succinylglutamate desuccinylase (344 aa).

3 residues coordinate Zn(2+): histidine 63, glutamate 66, and histidine 160. Glutamate 224 is a catalytic residue.

The protein belongs to the AspA/AstE family. Succinylglutamate desuccinylase subfamily. It depends on Zn(2+) as a cofactor.

The catalysed reaction is N-succinyl-L-glutamate + H2O = L-glutamate + succinate. It functions in the pathway amino-acid degradation; L-arginine degradation via AST pathway; L-glutamate and succinate from L-arginine: step 5/5. In terms of biological role, transforms N(2)-succinylglutamate into succinate and glutamate. In Shewanella sp. (strain MR-4), this protein is Succinylglutamate desuccinylase.